We begin with the raw amino-acid sequence, 592 residues long: V-type ATP synthase alpha chain (592 aa).

Residue 232–239 participates in ATP binding; sequence GPFGAGKT.

Belongs to the ATPase alpha/beta chains family.

It catalyses the reaction ATP + H2O + 4 H(+)(in) = ADP + phosphate + 5 H(+)(out). In terms of biological role, produces ATP from ADP in the presence of a proton gradient across the membrane. The V-type alpha chain is a catalytic subunit. The chain is V-type ATP synthase alpha chain from Clostridium botulinum (strain Eklund 17B / Type B).